The sequence spans 945 residues: Xylanolytic transcriptional activator xlnR (945 aa).

Disordered stretches follow at residues 1–33 (MSTP…TVGL) and 53–74 (AAGT…MSHA). Low complexity predominate over residues 14-24 (SPFSSGSQSTG). The zn(2)-C6 fungal-type DNA-binding region spans 125–151 (CDQCNQLRTKCDGQHPCAHCIEFGLTC). Disordered regions lie at residues 172-251 (AAAA…PSLG) and 559-601 (PPNV…INVT). 2 stretches are compositionally biased toward polar residues: residues 177–188 (HGSNGHSGQANA) and 218–251 (ISSQ…PSLG). Residues 565 to 581 (ARQDGERDGDGEADRRH) are compositionally biased toward basic and acidic residues.

Belongs to the xlnR/xlr1 family.

Its subcellular location is the nucleus. Its function is as follows. Transcriptional activator of the xylanolytic system. Involved in the regulation of extracellular cellulolytic and xylanolytic genes and in the regulation of the intracellular activities of D-xylose catabolic genes in the pentose catabolic pathway (PCP) in response to the presence of D-xylose. This is Xylanolytic transcriptional activator xlnR (xlnR) from Aspergillus kawachii (White koji mold).